The following is a 553-amino-acid chain: Protein PALS2 (553 aa).

2 L27 domains span residues 1 to 48 (MQQV…EDSK) and 49 to 107 (LEAV…YDSP). The PDZ domain maps to 129–208 (ILGIHKKAGE…SVTLKILPSY (80 aa)). In terms of domain architecture, SH3 spans 228 to 297 (VRQVFVKCHF…PSQFLEEKRK (70 aa)). A Guanylate kinase-like domain is found at 351 to 538 (RKTLVLIGAQ…AFEKLQTAIE (188 aa)). Y513 is subject to Phosphotyrosine.

Belongs to the MAGUK family. Interacts with CADM1. Interacts with the LIN7 proteins.

The protein localises to the membrane. The polypeptide is Protein PALS2 (Mus musculus (Mouse)).